Here is a 367-residue protein sequence, read N- to C-terminus: BTB/POZ domain-containing protein Tiwaz (367 aa).

Disordered regions lie at residues 16 to 46 and 62 to 87; these read LTVD…PRDL and SSPT…SSVT. The segment covering 28 to 45 has biased composition (basic and acidic residues); that stretch reads CDMDRERERDVKALEPRD. Residues 135-205 enclose the BTB domain; the sequence is APVHIDVGGT…MRNSRLLIAE (71 aa). A disordered region spans residues 240–261; the sequence is GNYLVAPPTPPARHIKTSPRTS.

Its function is as follows. Functions with the transcription factor TfAP-2 to regulate octopamine neuronal signaling pathways that control behaviors such as male aggression, male mating, and the initiation of feeding. Required for TfAP-2 transcriptional activity in octopaminergic neurons. Functions with TfAP-2 to regulate expression of genes which are involved in promoting octopamine production and secretion from octopaminergic neurons, such as Tbh and Vmat. Octopamine then modulates feeding and male aggression by regulating the expression of the satiation hormone Dsk in insulin-producing cells (IPCs). Functions with octopamine and Dsk as part of a negative feedback loop to prevent overeating; acts with TfAP-2 to regulate octopamine signaling pathways that initiate feeding, then octopamine activates expression of Dsk which inhibits consummatory behavior. May also be involved in negatively regulating nociception in larvae to prevent spontaneous pain and hyperalgesia. This chain is BTB/POZ domain-containing protein Tiwaz, found in Drosophila melanogaster (Fruit fly).